Consider the following 868-residue polypeptide: DNA mismatch repair protein MutS (868 aa).

Position 620-627 (620-627) interacts with ATP; that stretch reads GPNMSGKS.

It belongs to the DNA mismatch repair MutS family.

This protein is involved in the repair of mismatches in DNA. It is possible that it carries out the mismatch recognition step. This protein has a weak ATPase activity. In Flavobacterium johnsoniae (strain ATCC 17061 / DSM 2064 / JCM 8514 / BCRC 14874 / CCUG 350202 / NBRC 14942 / NCIMB 11054 / UW101) (Cytophaga johnsonae), this protein is DNA mismatch repair protein MutS.